Consider the following 377-residue polypeptide: Guanine nucleotide-binding protein subunit alpha-13 (377 aa).

2 S-palmitoyl cysteine lipidation sites follow: C14 and C18. Positions 47-377 constitute a G-alpha domain; that stretch reads RLVKILLLGA…HDNLKQLMLQ (331 aa). The interval 50–63 is G1 motif; that stretch reads KILLLGAGESGKST. Residues 58–63, S173, and 197–200 each bind GTP; these read ESGKST and LLAR. S62 is a Mg(2+) binding site. Residues 195–203 form a G2 motif region; sequence DILLARRPT. T203 is a Mg(2+) binding site. At T203 the chain carries Phosphothreonine. A G3 motif region spans residues 218 to 227; it reads FKMVDVGGQR. A G4 motif region spans residues 287-294; that stretch reads ILFLNKTD. GTP contacts are provided by residues 291–294 and A349; that span reads NKTD. The interval 347-352 is G5 motif; the sequence is TTAINT.

This sequence belongs to the G-alpha family. G(12) subfamily. As to quaternary structure, g proteins are composed of 3 units; alpha, beta and gamma. The alpha chain contains the guanine nucleotide binding site. Interacts with UBXD5. Interacts with HAX1. Interacts (in GTP-bound form) with PPP5C (via TPR repeats); activates PPP5C phosphatase activity and translocates PPP5C to the cell membrane. Interacts with RGS22. Interacts (in GTP-bound form) with ARHGEF1. Interacts (in GTP-bound form) with ARHGEF11 (via RGS domain). Interacts (in GTP-bound form) with ARHGEF12 (via RGS domain). Interacts with CTNND1. Interacts with GAS2L2. Interacts with GPR35. Interacts with GPR174. Phosphorylation on Thr-203 destabilizes the heterotrimer of alpha, beta and gamma, and inhibits Rho activation. In terms of tissue distribution, expressed in brain and testis, as well as in kidney and sperm (at protein level).

The protein resides in the membrane. The protein localises to the melanosome. Its subcellular location is the cytoplasm. It is found in the nucleus. Its function is as follows. Guanine nucleotide-binding proteins (G proteins) are involved as modulators or transducers in various transmembrane signaling systems. Activates effector molecule RhoA by binding and activating RhoGEFs (ARHGEF1/p115RhoGEF, ARHGEF11/PDZ-RhoGEF and ARHGEF12/LARG). GNA13-dependent Rho signaling subsequently regulates transcription factor AP-1 (activating protein-1). Promotes tumor cell invasion and metastasis by activating Rho/ROCK signaling pathway. Inhibits CDH1-mediated cell adhesion in a process independent from Rho activation. In lymphoid follicles, transmits P2RY8- and S1PR2-dependent signals that lead to inhibition of germinal center (GC) B cell growth and migration outside the GC niche. The sequence is that of Guanine nucleotide-binding protein subunit alpha-13 (Gna13) from Mus musculus (Mouse).